The following is a 322-amino-acid chain: Gluconeogenesis factor (322 aa).

The protein belongs to the gluconeogenesis factor family.

It localises to the cytoplasm. In terms of biological role, required for morphogenesis under gluconeogenic growth conditions. The polypeptide is Gluconeogenesis factor (Listeria monocytogenes serovar 1/2a (strain ATCC BAA-679 / EGD-e)).